A 174-amino-acid chain; its full sequence is MLDKLRSRIVHLGPSLLSVPVKLTPFALKRQVLEQVLSWQFRQALDDGELEFLEGRWLSIHVRDIDLQWFTSVVNGKLVVSQNAQADVSFSADASDLLMIAARKQDPDTLFFQRRLVIEGDTELGLYVKNLMDAIELEQMPKALRMMLLQLADFVEAGMKTAPETKQTSVGEPC.

The region spanning 45–133 is the SCP2 domain; it reads LDDGELEFLE…LGLYVKNLMD (89 aa).

This sequence belongs to the UbiT family.

The protein operates within cofactor biosynthesis; ubiquinone biosynthesis. In terms of biological role, required for O(2)-independent ubiquinone (coenzyme Q) biosynthesis. Likely functions as an accessory factor. This chain is Ubiquinone biosynthesis accessory factor UbiT, found in Escherichia coli O157:H7.